Consider the following 423-residue polypeptide: Galactosylceramide sulfotransferase (423 aa).

At 1–14 (MLPPQKKPWESMAK) the chain is on the cytoplasmic side. Residues 15 to 35 (GLVLGALFTSFLLLVYSYAVP) traverse the membrane as a helical; Signal-anchor for type II membrane protein segment. Residues 36-423 (PLHAGLASTT…WKFIRDFLRW (388 aa)) are Lumenal-facing. 2 N-linked (GlcNAc...) asparagine glycosylation sites follow: N66 and N312.

This sequence belongs to the galactose-3-O-sulfotransferase family. As to expression, expressed in kidney proximal tubule, gastric mucosa and adenocarcinoma. Highly expressed in renal cell carcinoma cell lines.

The protein resides in the golgi apparatus membrane. The catalysed reaction is a beta-D-galactosyl-(1&lt;-&gt;1')-N-acylsphing-4-enine + 3'-phosphoadenylyl sulfate = an N-acyl-1-beta-D-(3-O-sulfo)-galactosyl-sphing-4-enine + adenosine 3',5'-bisphosphate + H(+). It catalyses the reaction a 1-O-alkyl-2-acyl-3-O-(beta-D-galactosyl)-sn-glycerol + 3'-phosphoadenylyl sulfate = a 1-O-alkyl-2-acyl-3-(beta-D-3-sulfogalactosyl)-sn-glycerol + adenosine 3',5'-bisphosphate + H(+). It carries out the reaction a beta-D-Gal-(1&lt;-&gt;1')-ceramide + 3'-phosphoadenylyl sulfate = 1-(3-O-sulfo-beta-D-galactosyl)-ceramide + adenosine 3',5'-bisphosphate + H(+). The enzyme catalyses a 1,2-diacyl-3-O-(beta-D-galactosyl)-sn-glycerol + 3'-phosphoadenylyl sulfate = 1,2-diacyl-3-(3-O-sulfo-beta-D-galactosyl)-sn-glycerol + adenosine 3',5'-bisphosphate + H(+). The catalysed reaction is a beta-D-Gal-(1-&gt;4)-beta-D-Glc-(1&lt;-&gt;1)-Cer(d18:1(4E)) + 3'-phosphoadenylyl sulfate = beta-D-3-sulfogalactosyl-(1-&gt;4)-beta-D-glucosyl-(1&lt;-&gt;1')-N-acylsphing-4-enine + adenosine 3',5'-bisphosphate + H(+). It participates in lipid metabolism; sphingolipid metabolism. In terms of biological role, catalyzes the transfer of a sulfate group to position 3 of non-reducing beta-galactosyl residues in glycerolipids and sphingolipids, therefore participates in the biosynthesis of sulfoglycolipids. Catalyzes the synthesis of galactosylceramide sulfate (sulfatide), a major lipid component of the myelin sheath and of monogalactosylalkylacylglycerol sulfate (seminolipid), present in spermatocytes. Seems to prefer beta-glycosides at the non-reducing termini of sugar chains attached to a lipid moiety. Also acts on lactosylceramide, galactosyl 1-alkyl-2-sn-glycerol and galactosyl diacylglycerol (in vitro). The protein is Galactosylceramide sulfotransferase of Homo sapiens (Human).